The primary structure comprises 496 residues: Probable E3 ubiquitin-protein ligase XBOS32 (496 aa).

ANK repeat units follow at residues 50–79, 83–112, 117–147, 180–209, and 223–252; these read GRNS…EINL, RGQT…NVHR, NGGS…SMPN, GGLT…SVIE, and AGST…SLSA. Residues 321-368 form an RING-type zinc finger; that stretch reads CAVCLEGSCSVAAEGCKHEFCTRCALYLCSTSYTSVSPAGAIPCPLCR.

It carries out the reaction S-ubiquitinyl-[E2 ubiquitin-conjugating enzyme]-L-cysteine + [acceptor protein]-L-lysine = [E2 ubiquitin-conjugating enzyme]-L-cysteine + N(6)-ubiquitinyl-[acceptor protein]-L-lysine.. Its pathway is protein modification; protein ubiquitination. The polypeptide is Probable E3 ubiquitin-protein ligase XBOS32 (XBOS32) (Oryza sativa subsp. japonica (Rice)).